A 146-amino-acid chain; its full sequence is D-aminoacyl-tRNA deacylase (146 aa).

A Gly-cisPro motif, important for rejection of L-amino acids motif is present at residues 138-139 (GP).

This sequence belongs to the DTD family. In terms of assembly, homodimer.

The protein resides in the cytoplasm. The catalysed reaction is glycyl-tRNA(Ala) + H2O = tRNA(Ala) + glycine + H(+). The enzyme catalyses a D-aminoacyl-tRNA + H2O = a tRNA + a D-alpha-amino acid + H(+). Its function is as follows. An aminoacyl-tRNA editing enzyme that deacylates mischarged D-aminoacyl-tRNAs. Also deacylates mischarged glycyl-tRNA(Ala), protecting cells against glycine mischarging by AlaRS. Acts via tRNA-based rather than protein-based catalysis; rejects L-amino acids rather than detecting D-amino acids in the active site. By recycling D-aminoacyl-tRNA to D-amino acids and free tRNA molecules, this enzyme counteracts the toxicity associated with the formation of D-aminoacyl-tRNA entities in vivo and helps enforce protein L-homochirality. This chain is D-aminoacyl-tRNA deacylase, found in Xanthomonas axonopodis pv. citri (strain 306).